A 56-amino-acid chain; its full sequence is Serine protease inhibitor Kazal-type 1 (56 aa).

The Kazal-like domain maps to 3–56 (PQREATCTSEVSGCPKIYNPVCGTDGITYSNECVLCSENKKRQTPVLIQKSGPC). 3 cysteine pairs are disulfide-bonded: Cys-9/Cys-38, Cys-16/Cys-35, and Cys-24/Cys-56.

It localises to the secreted. In terms of biological role, serine protease inhibitor which exhibits anti-trypsin activity. In the pancreas, protects against trypsin-catalyzed premature activation of zymogens. In the male reproductive tract, binds to sperm heads where it modulates sperm capacitance by inhibiting calcium uptake and nitrogen oxide (NO) production. This chain is Serine protease inhibitor Kazal-type 1 (SPINK1), found in Sus scrofa (Pig).